The primary structure comprises 262 residues: Pyridoxine 5'-phosphate synthase (262 aa).

Asn6 contacts 3-amino-2-oxopropyl phosphate. 8 to 9 contributes to the 1-deoxy-D-xylulose 5-phosphate binding site; it reads DH. Position 17 (Arg17) interacts with 3-amino-2-oxopropyl phosphate. Catalysis depends on His43, which acts as the Proton acceptor. 2 residues coordinate 1-deoxy-D-xylulose 5-phosphate: Arg45 and His50. The Proton acceptor role is filled by Glu70. Thr102 is a binding site for 1-deoxy-D-xylulose 5-phosphate. Residue His215 is the Proton donor of the active site. 3-amino-2-oxopropyl phosphate is bound by residues Gly216 and 237-238; that span reads GH.

This sequence belongs to the PNP synthase family. Homooctamer; tetramer of dimers.

Its subcellular location is the cytoplasm. The catalysed reaction is 3-amino-2-oxopropyl phosphate + 1-deoxy-D-xylulose 5-phosphate = pyridoxine 5'-phosphate + phosphate + 2 H2O + H(+). It participates in cofactor biosynthesis; pyridoxine 5'-phosphate biosynthesis; pyridoxine 5'-phosphate from D-erythrose 4-phosphate: step 5/5. Functionally, catalyzes the complicated ring closure reaction between the two acyclic compounds 1-deoxy-D-xylulose-5-phosphate (DXP) and 3-amino-2-oxopropyl phosphate (1-amino-acetone-3-phosphate or AAP) to form pyridoxine 5'-phosphate (PNP) and inorganic phosphate. The polypeptide is Pyridoxine 5'-phosphate synthase (Helicobacter pylori (strain P12)).